The primary structure comprises 653 residues: Splicing factor 1 (653 aa).

2 disordered regions span residues 1–44 and 65–94; these read MATG…PPGL and LRTG…GKRL. An N-acetylalanine modification is found at Ala2. Ser14 carries the post-translational modification Phosphoserine. Residues 15-19 carry the Nuclear localization signal motif; the sequence is KKRKR. The residue at position 20 (Ser20) is a Phosphoserine; by PKG. Phosphoserine occurs at positions 80 and 82. Tyr87 is subject to Phosphotyrosine. The residue at position 89 (Ser89) is a Phosphoserine. One can recognise a KH domain in the interval 141–222; it reads MIPQDEYPEI…ENVKKAVEQI (82 aa). The segment at 277–296 adopts a CCHC-type zinc-finger fold; it reads TVCTKCGGAGHIASDCKFQR. Disordered stretches follow at residues 325 to 584 and 611 to 653; these read VPAS…APPP and RIPP…GKAA. Low complexity predominate over residues 335–350; it reads PATTPLASAPRPAAPA. Gly residues predominate over residues 382–394; it reads MHGGGPGGPGGGP. Pro residues-rich tracts occupy residues 418–447 and 470–499; these read NGPP…PPPM and MPPP…PLPP. Low complexity predominate over residues 515 to 534; that stretch reads SSMASSTPLPWQQNTTTTTT. Over residues 567–584 the composition is skewed to pro residues; the sequence is VPLPPGVQPPLPPGAPPP.

Belongs to the BBP/SF1 family. In terms of assembly, binds U2AF2. Interacts with U1 snRNA. Interacts with RBM17. Binds EWSR1, FUS and TAF15. Post-translationally, phosphorylation on Ser-20 interferes with U2AF2 binding and spliceosome assembly. In terms of tissue distribution, detected at intermediate levels in spleen. Lower levels in heart, kidney, brain, liver, testis, bone marrow, adrenal gland, lymph nodes, pancreas and thymus.

It is found in the nucleus. In terms of biological role, necessary for the ATP-dependent first step of spliceosome assembly. Binds to the intron branch point sequence (BPS) 5'-UACUAAC-3' of the pre-mRNA. May act as transcription repressor. This is Splicing factor 1 (Sf1) from Mus musculus (Mouse).